The following is a 408-amino-acid chain: 1-deoxy-D-xylulose 5-phosphate reductoisomerase (408 aa).

NADPH-binding residues include Thr19, Gly20, Ser21, Ile22, Gly45, Asn47, and Asn130. 1-deoxy-D-xylulose 5-phosphate is bound at residue Lys131. NADPH is bound at residue Glu132. Asp156 provides a ligand contact to Mn(2+). Ser157, Glu158, Ser182, and His205 together coordinate 1-deoxy-D-xylulose 5-phosphate. Glu158 serves as a coordination point for Mn(2+). Gly211 is an NADPH binding site. 4 residues coordinate 1-deoxy-D-xylulose 5-phosphate: Ser218, Asn223, Lys224, and Glu227. Glu227 is a binding site for Mn(2+).

The protein belongs to the DXR family. Mg(2+) is required as a cofactor. The cofactor is Mn(2+).

The catalysed reaction is 2-C-methyl-D-erythritol 4-phosphate + NADP(+) = 1-deoxy-D-xylulose 5-phosphate + NADPH + H(+). It functions in the pathway isoprenoid biosynthesis; isopentenyl diphosphate biosynthesis via DXP pathway; isopentenyl diphosphate from 1-deoxy-D-xylulose 5-phosphate: step 1/6. Functionally, catalyzes the NADPH-dependent rearrangement and reduction of 1-deoxy-D-xylulose-5-phosphate (DXP) to 2-C-methyl-D-erythritol 4-phosphate (MEP). The protein is 1-deoxy-D-xylulose 5-phosphate reductoisomerase of Gluconobacter oxydans (strain 621H) (Gluconobacter suboxydans).